Consider the following 94-residue polypeptide: Large ribosomal subunit protein bL25 (94 aa).

It belongs to the bacterial ribosomal protein bL25 family. In terms of assembly, part of the 50S ribosomal subunit; part of the 5S rRNA/L5/L18/L25 subcomplex. Contacts the 5S rRNA. Binds to the 5S rRNA independently of L5 and L18.

Functionally, this is one of the proteins that binds to the 5S RNA in the ribosome where it forms part of the central protuberance. This is Large ribosomal subunit protein bL25 from Shigella boydii serotype 4 (strain Sb227).